A 337-amino-acid polypeptide reads, in one-letter code: Biotin synthase 1 (337 aa).

Positions methionine 1–histidine 23 are disordered. In terms of domain architecture, Radical SAM core spans threonine 57–arginine 284. Residues cysteine 72, cysteine 76, and cysteine 79 each coordinate [4Fe-4S] cluster. Positions 116, 147, 207, and 279 each coordinate [2Fe-2S] cluster.

The protein belongs to the radical SAM superfamily. Biotin synthase family. In terms of assembly, homodimer. It depends on [4Fe-4S] cluster as a cofactor. [2Fe-2S] cluster serves as cofactor.

The enzyme catalyses (4R,5S)-dethiobiotin + (sulfur carrier)-SH + 2 reduced [2Fe-2S]-[ferredoxin] + 2 S-adenosyl-L-methionine = (sulfur carrier)-H + biotin + 2 5'-deoxyadenosine + 2 L-methionine + 2 oxidized [2Fe-2S]-[ferredoxin]. Its pathway is cofactor biosynthesis; biotin biosynthesis; biotin from 7,8-diaminononanoate: step 2/2. Catalyzes the conversion of dethiobiotin (DTB) to biotin by the insertion of a sulfur atom into dethiobiotin via a radical-based mechanism. The protein is Biotin synthase 1 of Polaromonas sp. (strain JS666 / ATCC BAA-500).